Reading from the N-terminus, the 122-residue chain is Large ribosomal subunit protein uL14c (122 aa).

Belongs to the universal ribosomal protein uL14 family. As to quaternary structure, part of the 50S ribosomal subunit.

It is found in the plastid. Its subcellular location is the chloroplast. Binds to 23S rRNA. This is Large ribosomal subunit protein uL14c from Psilotum nudum (Whisk fern).